The chain runs to 440 residues: C-terminal-binding protein 1 (440 aa).

Residues 1-70 (MGSSHLLNKG…EIHEKVLNEA (70 aa)) are interaction with GLIS2 1. Residues Ser100, 180–185 (IGLGRV), Asp204, 237–243 (CGLNEHN), 264–266 (TAR), and Asp290 contribute to the NAD(+) site. Arg266 is a catalytic residue. An interaction with GLIS2 2 region spans residues 288 to 360 (ALDVHESEPF…VNKDHLTAAT (73 aa)). Residue Glu295 is part of the active site. Phosphoserine is present on Ser300. His315 functions as the Proton donor in the catalytic mechanism. Residue 315–318 (HAAW) coordinates NAD(+). The interval 408–440 (SHGLPPVAHPPHAPSPGQTVKPEADRDHASDQL) is disordered. Position 422 is a phosphoserine; by HIPK2 (Ser422). Lys428 is covalently cross-linked (Glycyl lysine isopeptide (Lys-Gly) (interchain with G-Cter in SUMO)). Residues 429 to 440 (PEADRDHASDQL) show a composition bias toward basic and acidic residues.

It belongs to the D-isomer specific 2-hydroxyacid dehydrogenase family. As to quaternary structure, homo- or heterodimer. Heterodimer with CTBP2. Interacts with PRDM16; the interaction represses white adipose tissue (WAT)-specific genes expression. Interacts with GLIS2, FOXP2, HDAC4, HDAC5, HDAC9 and ZNF217. Interacts with ELK3 (via its PXDLS motif). Interacts with RBBP8 (via its PXDLS motif); the interaction is disrupted by binding to adenovirus E1A. Interacts with FOXP1, HIPK2, PNN, NRIP1, MECOM, ZFHX1B and WIZ. Interacts with ZNF366 (via PXDLS motif). Interaction with SATB1 (non-acetylated form); the interaction stabilizes its attachment to DNA and promotes transcription repression. Interacts with BCL6; the interaction is required for BCL6 transcriptional autoinhibition and inhibition of some BCL6 target genes. Interacts with IKZF4. Interacts with MCRIP1 (unphosphorylated form, via the PXDLS motif); competitively inhibiting CTBP-ZEB1 interaction. Interacts with Bassoon/BSN; this interaction targets and anchors CTBP1 to presynapses. Interacts with SIMC1. (Microbial infection) Interacts with Epstein-Barr virus EBNA3. Interacts with Epstein-Barr virus EBNA6; this interaction leads to gene repression, but also seems to interfere with the repressive function of CtBP pre-bound to DNA, leading to EBNA6 mediated up-regulation of many cellular genes. In terms of assembly, (Microbial infection) Interacts with adenovirus E1A protein (via its C-terminus); the interaction disrupts the interaction of CTBP1 with RBBP8. As to quaternary structure, (Microbial infection) Interacts with human adenovirus 5 E1A protein; this interaction seems to potentiate viral replication. Requires NAD(+) as cofactor. Post-translationally, the level of phosphorylation appears to be regulated during the cell cycle. Phosphorylation by HIPK2 on Ser-422 induces proteasomal degradation. In terms of processing, ADP-ribosylated; when cells are exposed to brefeldin A. Sumoylation on Lys-428 is promoted by the E3 SUMO-protein ligase CBX4. In terms of tissue distribution, expressed in germinal center B-cells.

The protein localises to the cytoplasm. The protein resides in the nucleus. Functionally, corepressor targeting diverse transcription regulators such as GLIS2 or BCL6. Has dehydrogenase activity. Involved in controlling the equilibrium between tubular and stacked structures in the Golgi complex. Functions in brown adipose tissue (BAT) differentiation. The protein is C-terminal-binding protein 1 (CTBP1) of Homo sapiens (Human).